The following is a 479-amino-acid chain: Aryl-phospho-beta-D-glucosidase BglA (479 aa).

Glu176 acts as the Proton donor in catalysis. Glu377 serves as the catalytic Nucleophile.

This sequence belongs to the glycosyl hydrolase 1 family.

It carries out the reaction 6-phospho-beta-D-glucosyl-(1-&gt;4)-D-glucose + H2O = D-glucose 6-phosphate + D-glucose. Functionally, catalyzes the hydrolysis of aryl-phospho-beta-D-glucosides such as 4-methylumbelliferyl-phospho-beta-D-glucopyranoside (MUG-P), phosphoarbutin and phosphosalicin. Plays a major role in the utilization of arbutin or salicin as the sole carbon source. BglA and BglH are the major proteins contributing to hydrolysis of MUG-P by extracts of late-exponential-phase or stationary-phase B.subtilis cells. The protein is Aryl-phospho-beta-D-glucosidase BglA (bglA) of Bacillus subtilis (strain 168).